A 748-amino-acid polypeptide reads, in one-letter code: Translation factor GUF1 homolog 1, mitochondrial (748 aa).

The transit peptide at 1–29 (MRVGCCLLLKPIRQRLCTASISSRHIMRW) directs the protein to the mitochondrion. Positions 94 to 276 (SHIRNFAVVA…AIIERVPPPT (183 aa)) constitute a tr-type G domain. Residues 103 to 110 (AHVDHGKT), 167 to 171 (DTPGH), and 221 to 224 (TKMD) each bind GTP.

The protein belongs to the TRAFAC class translation factor GTPase superfamily. Classic translation factor GTPase family. LepA subfamily.

Its subcellular location is the mitochondrion inner membrane. The enzyme catalyses GTP + H2O = GDP + phosphate + H(+). In terms of biological role, promotes mitochondrial protein synthesis. May act as a fidelity factor of the translation reaction, by catalyzing a one-codon backward translocation of tRNAs on improperly translocated ribosomes. Binds to mitochondrial ribosomes in a GTP-dependent manner. The protein is Translation factor GUF1 homolog 1, mitochondrial of Trypanosoma cruzi (strain CL Brener).